Reading from the N-terminus, the 204-residue chain is 8-oxoguanine DNA glycosylase/AP lyase (204 aa).

Active-site residues include lysine 128 and aspartate 146.

It belongs to the type-2 OGG1 family.

It carries out the reaction 2'-deoxyribonucleotide-(2'-deoxyribose 5'-phosphate)-2'-deoxyribonucleotide-DNA = a 3'-end 2'-deoxyribonucleotide-(2,3-dehydro-2,3-deoxyribose 5'-phosphate)-DNA + a 5'-end 5'-phospho-2'-deoxyribonucleoside-DNA + H(+). Functionally, catalyzes the excision of an oxidatively damaged form of guanine (7,8-dihydro-8-oxoguanine = 8-oxoG) from DNA. Also cleaves the DNA backbone at apurinic/apyrimidinic sites (AP sites). The protein is 8-oxoguanine DNA glycosylase/AP lyase of Sulfurisphaera tokodaii (strain DSM 16993 / JCM 10545 / NBRC 100140 / 7) (Sulfolobus tokodaii).